Consider the following 486-residue polypeptide: Ribulose bisphosphate carboxylase large chain (486 aa).

Residues Asn126 and Thr176 each contribute to the substrate site. Lys178 (proton acceptor) is an active-site residue. Lys180 is a binding site for substrate. Lys204, Asp206, and Glu207 together coordinate Mg(2+). N6-carboxylysine is present on Lys204. Residue His296 is the Proton acceptor of the active site. Residues Arg297, His329, and Ser381 each coordinate substrate.

Belongs to the RuBisCO large chain family. Type I subfamily. As to quaternary structure, heterohexadecamer of 8 large chains and 8 small chains. It depends on Mg(2+) as a cofactor.

The enzyme catalyses 2 (2R)-3-phosphoglycerate + 2 H(+) = D-ribulose 1,5-bisphosphate + CO2 + H2O. It carries out the reaction D-ribulose 1,5-bisphosphate + O2 = 2-phosphoglycolate + (2R)-3-phosphoglycerate + 2 H(+). Its function is as follows. RuBisCO catalyzes two reactions: the carboxylation of D-ribulose 1,5-bisphosphate, the primary event in carbon dioxide fixation, as well as the oxidative fragmentation of the pentose substrate. Both reactions occur simultaneously and in competition at the same active site. The protein is Ribulose bisphosphate carboxylase large chain of Rhizobium meliloti (strain 1021) (Ensifer meliloti).